A 1332-amino-acid polypeptide reads, in one-letter code: MNQFVTNTKNVIRGKYHPEFLQNEVLADIFAHTAQTLPDKTALIEADKTLSYGELYQQALIMAQHLALKGVKPGHIVGLWLPRGIELLKAQLAICLSGAAWLPFDMDTPADRIAVCLEDAEAVGMITTDEWYEHLAEVPQTKWTNTELQKPLSESVSLAKTTPDQPAYIIYTSGSTGKPKGIVITQKNICHFLRSENSILGIQEQDKVYQGFSVAFDMSFEEIWLSYLVGATLWIAPKSLVSDPERLCQTLKQEQITVLHAVPTLLALFPEDVPNLRIINLGGEMCPDSLVDRWALPHHQMFNTYGPTETTVSASLELLERGKPVTIGKPLPNYGMLVINSERELLEQGETGELCIFGPSVAQGYLGRPDLTADKFIENPWAMSVEEELLYRTGDLAKIDEFGQVHCLGRADDQVKIRGFRVELGEIEAALCDIDGIGTAAVILRPEDGIDQLIAFIAPEIDAKQAIEIKELRHNLSQRLPPYMVPNRFEIIEEVPRLLSGKIDRKALKARPLTSVVDRSESDQPQNPAEEILFEILNRLFPNMPIKLDSDFFDDLGGHSLLAAVLISNLREHAEYSHLTIQNLYQARRVGAIAALMLEQPEPTLFDSQIGQDNPRNQTYKWLCGIAQLVTIPVLISINILQWLAPFFTYHYFTGGTRDSIPYAIALSLLVYVSVIMSSFVLSITVKRLLMLGIGAGRYPLWGLTYFRWWLADRISNISPVYLLSGSTLLNLYLKALGAKIGHDVTISSVHIRMPSLLTIEDGVSIGSQVNLENAKVEHGHLVLGSIHLKQDSYVGSYAVLEENTVLEKQAHVNALTSIEYDTVVPEGEIWDGTPAQKIGHIDEQAKLPERPKLSFIRKIAEYGYYGVSALIIACLFFIPIFPSFLLVDWLDVNVFNINPNNHLQIALYYFILAIPASAMMMMITAVISSGLRKIALPRLEIGTYAVHGSTYYRKWFAAQILETSLQTLHGLFATIYAPTWFRMLGAKVGKNTEISTATGVIPEMLTLGEESFIADAVMLGDEEIKGGWMSLKATKIGNRSFVGNSAYIADGTVLPDNVLIGVQSKTPDNREMYDGQTWFGSPALLLPAREAAEKYPDHLTFKPSIKRRLMRGFIEGLRIVLPAALAIGVGYMIVLDVIDVINNYNIETGLVALTLAGLLYGVGCFLIVALLKWILIGRYQPRSAPMWTMFVWLSEGITSLYESVAIPNFLNYLRGTPMLPFFLRILGVRIGKDVYMDTADITEFDCVSIGDRAEFNSFSGPQTHLFEDRIMKIGQVNVGNDVVVNTRSIILYNANVSNHAVLGPLTLVMKGENIPAKSAWIGSPAVPWVHK.

Positions 217, 221, and 304 each coordinate L-ornithine. Positions 221, 304, 306, and 308 each coordinate D-ornithine. L-ornithine-binding residues include V312 and S313. S313 serves as a coordination point for D-ornithine. The region spanning 524-601 is the Carrier domain; the sequence is QPQNPAEEIL…AIAALMLEQP (78 aa). Residue S560 is modified to O-(pantetheine 4'-phosphoryl)serine. A run of 6 helical transmembrane segments spans residues 629 to 649, 664 to 684, 868 to 888, 908 to 928, 1120 to 1140, and 1151 to 1171; these read LVTI…PFFT, AIAL…VLSI, VSAL…FLLV, LYYF…TAVI, IVLP…DVID, and LVAL…IVAL.

It belongs to the ATP-dependent AMP-binding enzyme family. The cofactor is pantetheine 4'-phosphate.

The protein localises to the cell membrane. The enzyme catalyses n L-ornithine + n ATP + H2O = N(5)-(L-ornithyl)-[N(5)-(L-ornithyl)]n-1 + n AMP + n diphosphate + n H(+). It catalyses the reaction n D-ornithine + n ATP + H2O = N(5)-(D-ornithyl)-[N(5)-(D-ornithyl)]n-1 + n AMP + n diphosphate + n H(+). Functionally, catalyzes the polymerization of L-ornithine, generating poly-L-ornithine composed of 7-12 amino acid units joined via isopeptide bonds between the carboxylate and the side chain amine. This polymer exhibits potent antifungal activity and thus may have a potential role in survival benefit for A.baumannii. The reaction occurs via ATP-dependent adenylation of the substrate. Can also adenylate D-ornithine with similar efficiency and thus may produce D-ornithine polymers. This Acinetobacter baumannii (strain AB307-0294) protein is Delta-poly-L-ornithine synthetase.